A 259-amino-acid chain; its full sequence is 5'-nucleotidase SurE (259 aa).

4 residues coordinate a divalent metal cation: aspartate 10, aspartate 11, serine 41, and asparagine 96.

This sequence belongs to the SurE nucleotidase family. It depends on a divalent metal cation as a cofactor.

It localises to the cytoplasm. The catalysed reaction is a ribonucleoside 5'-phosphate + H2O = a ribonucleoside + phosphate. Functionally, nucleotidase that shows phosphatase activity on nucleoside 5'-monophosphates. This chain is 5'-nucleotidase SurE, found in Wolinella succinogenes (strain ATCC 29543 / DSM 1740 / CCUG 13145 / JCM 31913 / LMG 7466 / NCTC 11488 / FDC 602W) (Vibrio succinogenes).